The following is a 399-amino-acid chain: Glutathione S-transferase LANCL1 (399 aa).

Position 2 is an N-acetylalanine (Ala-2). The residue at position 142 (Lys-142) is an N6-acetyllysine. Cys-276 is a binding site for Zn(2+). Lys-317 contributes to the glutathione binding site. Zn(2+) contacts are provided by Cys-322 and His-323. 364–367 (RTPD) contacts glutathione.

Belongs to the LanC-like protein family. In terms of assembly, interacts with the C-terminal of STOM. Interacts with the EPS8 SH3 domain. Interaction with EPS8 is inhibited by glutathione binding. Strongly expressed in the brain, testis and skeletal muscle. Expressed in the neurons of the cerebellum, the germinal cells of the seminiferous tubules in testis, in liver hepoatocytes and in cardiac myocytes.

It localises to the cytoplasm. It is found in the cell membrane. It catalyses the reaction RX + glutathione = an S-substituted glutathione + a halide anion + H(+). The enzyme catalyses 1-chloro-2,4-dinitrobenzene + glutathione = 2,4-dinitrophenyl-S-glutathione + chloride + H(+). Functions as a glutathione transferase. Catalyzes conjugation of the glutathione (GSH) to artificial substrates 1-chloro-2,4-dinitrobenzene (CDNB) and p-nitrophenyl acetate. Mitigates neuronal oxidative stress during normal postnatal development and in response to oxidative stresses probably through GSH antioxidant defense mechanism. May play a role in EPS8 signaling. Binds glutathione. This Rattus norvegicus (Rat) protein is Glutathione S-transferase LANCL1.